A 501-amino-acid chain; its full sequence is NAD(P)H-quinone oxidoreductase subunit 2, chloroplastic (501 aa).

A run of 14 helical transmembrane segments spans residues Ile15–Phe35, Thr40–Phe60, Ile82–Ile102, Met107–Cys127, Leu132–Tyr152, Leu167–Leu187, Thr212–Phe232, Pro244–Thr264, Trp278–Ile298, Leu307–Leu327, Met333–Leu353, Phe378–Gly398, Gly410–Leu430, and Phe466–Phe486.

Belongs to the complex I subunit 2 family. As to quaternary structure, NDH is composed of at least 16 different subunits, 5 of which are encoded in the nucleus.

Its subcellular location is the plastid. The protein resides in the chloroplast thylakoid membrane. It catalyses the reaction a plastoquinone + NADH + (n+1) H(+)(in) = a plastoquinol + NAD(+) + n H(+)(out). The enzyme catalyses a plastoquinone + NADPH + (n+1) H(+)(in) = a plastoquinol + NADP(+) + n H(+)(out). In terms of biological role, NDH shuttles electrons from NAD(P)H:plastoquinone, via FMN and iron-sulfur (Fe-S) centers, to quinones in the photosynthetic chain and possibly in a chloroplast respiratory chain. The immediate electron acceptor for the enzyme in this species is believed to be plastoquinone. Couples the redox reaction to proton translocation, and thus conserves the redox energy in a proton gradient. The sequence is that of NAD(P)H-quinone oxidoreductase subunit 2, chloroplastic from Marchantia polymorpha (Common liverwort).